We begin with the raw amino-acid sequence, 430 residues long: tRNA(Ile)-lysidine synthase (430 aa).

21 to 26 (SGGLDS) contributes to the ATP binding site.

Belongs to the tRNA(Ile)-lysidine synthase family.

Its subcellular location is the cytoplasm. It catalyses the reaction cytidine(34) in tRNA(Ile2) + L-lysine + ATP = lysidine(34) in tRNA(Ile2) + AMP + diphosphate + H(+). Ligates lysine onto the cytidine present at position 34 of the AUA codon-specific tRNA(Ile) that contains the anticodon CAU, in an ATP-dependent manner. Cytidine is converted to lysidine, thus changing the amino acid specificity of the tRNA from methionine to isoleucine. The protein is tRNA(Ile)-lysidine synthase of Salmonella dublin (strain CT_02021853).